We begin with the raw amino-acid sequence, 233 residues long: Antigenic membrane protein (233 aa).

An N-terminal signal peptide occupies residues 1–32 (MQNQKNQKSLVAKVLVLFAAVALMFVGVQVFA). A helical transmembrane segment spans residues 206-226 (FLTLVAVVVVAAVAGGVFFFV).

The protein resides in the cell membrane. This Onion yellows phytoplasma (strain OY-M) protein is Antigenic membrane protein (amp).